The chain runs to 345 residues: Uroporphyrinogen decarboxylase (345 aa).

Substrate is bound by residues 26 to 30, F45, D75, Y151, S206, and H320; that span reads RQAGR.

The protein belongs to the uroporphyrinogen decarboxylase family. In terms of assembly, homodimer.

The protein localises to the cytoplasm. It carries out the reaction uroporphyrinogen III + 4 H(+) = coproporphyrinogen III + 4 CO2. Its pathway is porphyrin-containing compound metabolism; protoporphyrin-IX biosynthesis; coproporphyrinogen-III from 5-aminolevulinate: step 4/4. Catalyzes the decarboxylation of four acetate groups of uroporphyrinogen-III to yield coproporphyrinogen-III. The chain is Uroporphyrinogen decarboxylase from Staphylococcus carnosus (strain TM300).